The sequence spans 95 residues: Glutaredoxin 1 (95 aa).

The 95-residue stretch at 1–95 folds into the Glutaredoxin domain; that stretch reads MNKSILHTII…DKLLEHQPKN (95 aa). The cysteines at positions 17 and 20 are disulfide-linked.

It belongs to the glutaredoxin family. In terms of assembly, monomer.

It is found in the cytoplasm. Functionally, has a glutathione-disulfide oxidoreductase activity in the presence of NADPH and glutathione reductase. Reduces low molecular weight disulfides and proteins. This chain is Glutaredoxin 1 (grxC1), found in Rickettsia prowazekii (strain Madrid E).